A 359-amino-acid polypeptide reads, in one-letter code: tRNA-specific 2-thiouridylase MnmA (359 aa).

ATP is bound by residues 9 to 16 (GMSGGVDS) and Met35. Cys104 (nucleophile) is an active-site residue. An intrachain disulfide couples Cys104 to Cys200. Gly128 is an ATP binding site. Positions 150–152 (KDQ) are interaction with tRNA. Cys200 (cysteine persulfide intermediate) is an active-site residue. The interval 306–307 (RY) is interaction with tRNA.

It belongs to the MnmA/TRMU family.

Its subcellular location is the cytoplasm. It catalyses the reaction S-sulfanyl-L-cysteinyl-[protein] + uridine(34) in tRNA + AH2 + ATP = 2-thiouridine(34) in tRNA + L-cysteinyl-[protein] + A + AMP + diphosphate + H(+). In terms of biological role, catalyzes the 2-thiolation of uridine at the wobble position (U34) of tRNA, leading to the formation of s(2)U34. The polypeptide is tRNA-specific 2-thiouridylase MnmA (Clostridium perfringens (strain ATCC 13124 / DSM 756 / JCM 1290 / NCIMB 6125 / NCTC 8237 / Type A)).